The primary structure comprises 198 residues: Ribonuclease HII (198 aa).

Residues Gln-10–Ser-198 enclose the RNase H type-2 domain. Residues Asp-16, Glu-17, and Asp-108 each contribute to the a divalent metal cation site.

It belongs to the RNase HII family. It depends on Mn(2+) as a cofactor. Requires Mg(2+) as cofactor.

It is found in the cytoplasm. The catalysed reaction is Endonucleolytic cleavage to 5'-phosphomonoester.. Its function is as follows. Endonuclease that specifically degrades the RNA of RNA-DNA hybrids. The protein is Ribonuclease HII of Citrobacter koseri (strain ATCC BAA-895 / CDC 4225-83 / SGSC4696).